We begin with the raw amino-acid sequence, 395 residues long: L-rhamnonate dehydratase (395 aa).

Substrate-binding residues include H23 and R49. D215, E241, and E269 together coordinate Mg(2+). H319 (proton acceptor) is an active-site residue. E339 contacts substrate.

This sequence belongs to the mandelate racemase/muconate lactonizing enzyme family. RhamD subfamily. As to quaternary structure, homooctamer; tetramer of dimers. Mg(2+) serves as cofactor.

The enzyme catalyses L-rhamnonate = 2-dehydro-3-deoxy-L-rhamnonate + H2O. Its function is as follows. Catalyzes the dehydration of L-rhamnonate to 2-keto-3-deoxy-L-rhamnonate (KDR). This chain is L-rhamnonate dehydratase (rhmD), found in Polaromonas sp. (strain JS666 / ATCC BAA-500).